The sequence spans 188 residues: MNLSATILLAFGMSMDAFAASIGKGATLHKPKFSEAVRTGLIFGVIETLTPLVGWGLGMLASQFVLEWNHWIAFILLVFLGGRMIVEGVRGDSDEACDAPRRHGFWLLVTTAFATSLDAMAVGVGLAFLQVSIVTTALAIGCATFLMSTLGIMVGRFIGPLLGKRAEILGGIVLIGIGSEILWSHFAG.

Helical transmembrane passes span 3–23 (LSAT…ASIG), 41–61 (LIFG…GMLA), 62–82 (SQFV…FLGG), 107–129 (LLVT…LAFL), 143–163 (ATFL…PLLG), and 168–188 (ILGG…HFAG).

The protein belongs to the MntP (TC 9.B.29) family.

The protein resides in the cell inner membrane. Probably functions as a manganese efflux pump. The sequence is that of Putative manganese efflux pump MntP from Klebsiella pneumoniae (strain 342).